The following is a 452-amino-acid chain: CUGBP Elav-like family member 3 (452 aa).

3 consecutive RRM domains span residues 7-88 (IKLF…PADS), 94-174 (RKLF…FADT), and 367-445 (CNIF…LKRP).

The protein belongs to the CELF/BRUNOL family.

The protein resides in the nucleus. The protein localises to the cytoplasm. RNA-binding protein that may be involved in the regulation of pre-mRNA alternative splicing. The sequence is that of CUGBP Elav-like family member 3 (celf3) from Danio rerio (Zebrafish).